Here is a 224-residue protein sequence, read N- to C-terminus: Heme response regulator HssR (224 aa).

In terms of domain architecture, Response regulatory spans 3 to 116; sequence QCLVVDDDPR…ELIFRIRAVL (114 aa). The residue at position 52 (Asp-52) is a 4-aspartylphosphate. A DNA-binding region (ompR/PhoB-type) is located at residues 124-222; that stretch reads NSEMTIGNLT…VRGQGYKVEN (99 aa).

In terms of processing, phosphorylated by HssS.

The protein localises to the cytoplasm. In terms of biological role, member of the two-component regulatory system HssS/HssR involved in intracellular heme homeostasis and tempering of staphylococcal virulence. Phosphorylated HssR binds to a direct repeat sequence within hrtAB promoter and activates the expression of hrtAB, an efflux pump, in response to extracellular heme, hemin, hemoglobin or blood. The polypeptide is Heme response regulator HssR (hssR) (Staphylococcus aureus (strain Mu50 / ATCC 700699)).